Here is a 679-residue protein sequence, read N- to C-terminus: Transketolase 10 (679 aa).

His-40 is a substrate binding site. Thiamine diphosphate is bound by residues His-80 and 129–131; that span reads GPL. Asp-170 is a Mg(2+) binding site. Residues Gly-171 and Asn-200 each contribute to the thiamine diphosphate site. The Mg(2+) site is built by Asn-200 and Ile-202. Residues His-277, Arg-371, and Ser-398 each contribute to the substrate site. His-277 is a binding site for thiamine diphosphate. Thiamine diphosphate is bound by residues Glu-425 and Phe-452. Glu-425 serves as the catalytic Proton donor. Residues His-476, Asp-484, and Arg-535 each coordinate substrate.

This sequence belongs to the transketolase family. Homodimer. It depends on Mg(2+) as a cofactor. Ca(2+) is required as a cofactor. Mn(2+) serves as cofactor. Requires Co(2+) as cofactor. The cofactor is thiamine diphosphate. As to expression, leaves.

The catalysed reaction is D-sedoheptulose 7-phosphate + D-glyceraldehyde 3-phosphate = aldehydo-D-ribose 5-phosphate + D-xylulose 5-phosphate. Its function is as follows. Could be involved in the conversion of sugars, which are a major phenomenon in the rehydration process. In terms of biological role, catalyzes the transfer of a two-carbon ketol group from a ketose donor to an aldose acceptor, via a covalent intermediate with the cofactor thiamine pyrophosphate. In Craterostigma plantagineum (Blue gem), this protein is Transketolase 10 (TKT10).